The primary structure comprises 305 residues: LysM and putative peptidoglycan-binding domain-containing protein 3 (305 aa).

The Extracellular portion of the chain corresponds to 1 to 221 (MTGRNQHNGF…PYYGADWGMR (221 aa)). A glycan (N-linked (GlcNAc...) asparagine) is linked at asparagine 29. The interval 31–60 (SETEYSEEDGEAFELRSRGRERHHRSTSRD) is disordered. Residues 68–112 (LIREIKEGDTLISISLQYFCTVADIKRANNLLTEQDFFALRSLRI) enclose the LysM domain. Polar residues predominate over residues 121-144 (TETHNTAPHKSSSPSGTCRITETP). Residues 121–156 (TETHNTAPHKSSSPSGTCRITETPVSGASLDSTSSS) are disordered. Positions 146–156 (SGASLDSTSSS) are enriched in low complexity. Residues 222-242 (WWTAVAIMLVVGIVTPVFYLL) form a helical membrane-spanning segment. Topologically, residues 243-305 (YYEVLMKADV…QHHVKHQEET (63 aa)) are cytoplasmic.

The protein resides in the cell membrane. It localises to the golgi apparatus. In terms of biological role, essential for Golgi structural integrity. This is LysM and putative peptidoglycan-binding domain-containing protein 3 (lysmd3) from Danio rerio (Zebrafish).